The following is a 341-amino-acid chain: DER1-like family member protein 1 (341 aa).

The Cytoplasmic segment spans residues 1 to 41; it reads MAGPRNVRTLHGNGGRNNDVMGPKEFWLNIPPITRTLFTLA. Residues 42-62 form a helical membrane-spanning segment; that stretch reads IVMTIVGRLNLINPWYFIYVW. The Lumenal segment spans residues 63–122; that stretch reads NLTFKKVQIWRLLTSCVMLSSRAMPALMELYSIYDRSSQLERGHFGPGLSNRRGPMVTVD. A helical membrane pass occupies residues 123–143; it reads YAYYLCFCILAITTATTIIYG. Over 144-170 the chain is Cytoplasmic; sequence SYYPVVLTSGFISCITYTWSIDNANVQ. Residues 171–191 form a helical membrane-spanning segment; sequence IMFYGLIPVWGKYFPLIQLFI. A topological domain (lumenal) is located at residue serine 192. A helical membrane pass occupies residues 193–213; the sequence is FVFNEGDFVISLIGFTTGYLY. Residues 214-341 lie on the Cytoplasmic side of the membrane; it reads TCLDTHTLGP…GQTNSPSDSQ (128 aa). 2 stretches are compositionally biased toward polar residues: residues 276–286 and 296–341; these read SSQRETRTFSG and ATLS…SDSQ. A disordered region spans residues 276–341; sequence SSQRETRTFS…GQTNSPSDSQ (66 aa).

It belongs to the derlin family.

The protein resides in the endoplasmic reticulum membrane. Its function is as follows. May be involved in the degradation process of some misfolded endoplasmic reticulum (ER) luminal proteins. Its precise role is however unclear and its inability to complement der1 mutations, suggests either that it is not involved in degradation process of misfolded proteins, or that it participates in the destruction of specific misfolded ER luminal proteins. The polypeptide is DER1-like family member protein 1 (DFM1) (Saccharomyces cerevisiae (strain ATCC 204508 / S288c) (Baker's yeast)).